Consider the following 379-residue polypeptide: Glutamate 5-kinase (379 aa).

Lys15 is a binding site for ATP. 3 residues coordinate substrate: Ser56, Asp143, and Asn155. 175–176 serves as a coordination point for ATP; sequence SD. Residues 281-358 enclose the PUA domain; sequence KGTLTIDAGA…CDAAQILGIS (78 aa).

The protein belongs to the glutamate 5-kinase family.

Its subcellular location is the cytoplasm. It carries out the reaction L-glutamate + ATP = L-glutamyl 5-phosphate + ADP. It functions in the pathway amino-acid biosynthesis; L-proline biosynthesis; L-glutamate 5-semialdehyde from L-glutamate: step 1/2. Catalyzes the transfer of a phosphate group to glutamate to form L-glutamate 5-phosphate. This chain is Glutamate 5-kinase, found in Nitrobacter hamburgensis (strain DSM 10229 / NCIMB 13809 / X14).